The primary structure comprises 399 residues: Dual-specificity RNA methyltransferase RlmN (399 aa).

The active-site Proton acceptor is the glutamate 122. Residues 128-371 (ETDRGTLCVS…VRTPRGRDIL (244 aa)) form the Radical SAM core domain. Cysteines 135 and 374 form a disulfide. Residues cysteine 142, cysteine 146, and cysteine 149 each coordinate [4Fe-4S] cluster. S-adenosyl-L-methionine is bound by residues 200–201 (GE), serine 232, 254–256 (SLH), and asparagine 331. The active-site S-methylcysteine intermediate is the cysteine 374.

It belongs to the radical SAM superfamily. RlmN family. [4Fe-4S] cluster is required as a cofactor.

The protein localises to the cytoplasm. The catalysed reaction is adenosine(2503) in 23S rRNA + 2 reduced [2Fe-2S]-[ferredoxin] + 2 S-adenosyl-L-methionine = 2-methyladenosine(2503) in 23S rRNA + 5'-deoxyadenosine + L-methionine + 2 oxidized [2Fe-2S]-[ferredoxin] + S-adenosyl-L-homocysteine. It catalyses the reaction adenosine(37) in tRNA + 2 reduced [2Fe-2S]-[ferredoxin] + 2 S-adenosyl-L-methionine = 2-methyladenosine(37) in tRNA + 5'-deoxyadenosine + L-methionine + 2 oxidized [2Fe-2S]-[ferredoxin] + S-adenosyl-L-homocysteine. Its function is as follows. Specifically methylates position 2 of adenine 2503 in 23S rRNA and position 2 of adenine 37 in tRNAs. m2A2503 modification seems to play a crucial role in the proofreading step occurring at the peptidyl transferase center and thus would serve to optimize ribosomal fidelity. The sequence is that of Dual-specificity RNA methyltransferase RlmN from Rhodopseudomonas palustris (strain HaA2).